Consider the following 353-residue polypeptide: Guanine nucleotide-binding protein subunit alpha (353 aa).

The segment at 1 to 25 (MGCGMSTEDKEGKARNEEIENQLKR) is disordered. Residue glycine 2 is the site of N-myristoyl glycine attachment. A lipid anchor (S-palmitoyl cysteine) is attached at cysteine 3. The segment covering 7–25 (TEDKEGKARNEEIENQLKR) has biased composition (basic and acidic residues). The G-alpha domain maps to 32 to 353 (NEIKMLLLGA…QENLRLCGLI (322 aa)). A G1 motif region spans residues 35 to 48 (KMLLLGAGESGKST). Residues glutamate 43, serine 44, glycine 45, lysine 46, serine 47, threonine 48, aspartate 150, leucine 175, threonine 181, glycine 203, asparagine 269, lysine 270, aspartate 272, and alanine 325 each contribute to the GTP site. Serine 47 is a Mg(2+) binding site. The interval 173-181 (DVLRSRVKT) is G2 motif. Threonine 181 lines the Mg(2+) pocket. The tract at residues 196–205 (YRMFDVGGQR) is G3 motif. The segment at 265–272 (ILFLNKID) is G4 motif. The interval 323–328 (TCATDT) is G5 motif.

It belongs to the G-alpha family. G(q) subfamily. In terms of assembly, g proteins are composed of 3 units; alpha, beta and gamma. The alpha chain contains the guanine nucleotide binding site. Requires Mg(2+) as cofactor.

In terms of biological role, guanine nucleotide-binding proteins (G proteins) are involved as modulators or transducers in various transmembrane signaling systems. In Colletotrichum trifolii, this protein is Guanine nucleotide-binding protein subunit alpha (CTG1).